Reading from the N-terminus, the 473-residue chain is Putative protein TIC 214 C-terminal part (473 aa).

It belongs to the TIC214 family. As to quaternary structure, part of the Tic complex.

Its subcellular location is the plastid. The protein resides in the chloroplast. In terms of biological role, involved in protein precursor import into chloroplasts. May be part of an intermediate translocation complex acting as a protein-conducting channel at the inner envelope. The polypeptide is Putative protein TIC 214 C-terminal part (Anthoceros angustus (Hornwort)).